A 332-amino-acid chain; its full sequence is UPF0194 membrane protein YbhG (332 aa).

Residues 1–26 (MMKKPVVIELAVVVLAAVVAGGYWWY) form the signal peptide. The stretch at 108–209 (EEIAQAAAAV…LNLQDSTLIA (102 aa)) forms a coiled coil.

The protein belongs to the UPF0194 family.

Its subcellular location is the periplasm. The protein is UPF0194 membrane protein YbhG (ybhG) of Shigella sonnei (strain Ss046).